The chain runs to 657 residues: Glycogen debranching enzyme (657 aa).

D336 (nucleophile) is an active-site residue. The Proton donor role is filled by E371. The span at 458-467 (NEANGEENRD) shows a compositional bias: basic and acidic residues. Residues 458-479 (NEANGEENRDGTNNNYSNNHGK) are disordered.

This sequence belongs to the glycosyl hydrolase 13 family.

The enzyme catalyses Hydrolysis of (1-&gt;6)-alpha-D-glucosidic linkages to branches with degrees of polymerization of three or four glucose residues in limit dextrin.. It functions in the pathway glycan degradation; glycogen degradation. In terms of biological role, removes maltotriose and maltotetraose chains that are attached by 1,6-alpha-linkage to the limit dextrin main chain, generating a debranched limit dextrin. The protein is Glycogen debranching enzyme of Shigella sonnei (strain Ss046).